A 712-amino-acid polypeptide reads, in one-letter code: MASAAANNSSSAAYDAAETGGLLRRRNTTAAARGNAGEEEEEAEAVAPSVEQAFADKPVPSWREQLTVRAFVVGFLLSIMFNIIVMKLSLTTGVIPSLNVSASLLGFFLVRLWTAAIERVGFLKQPFTRQENTVIQTCVVSAYGVAFSGGFGSYLFGMSETIAKQATEANDPMNIKNPHLGWIIGFMFLVSFVGLFALVPMRKVMIVDYKLTYPSGTATAYLINGFHTPEGADLAKKQVRTLGKYFSISFLWAFFQWFYTAGDNCGFSSFPTFGLEAFKNRFYFDFSPTYVGVGMICPYIVNVSLLIGGIISWGIMWPLISKKKGSWYPETLPESSLLGLQAYKVFITIAVILGDGLYNFVKVFGYTIKGFIVMYKNKNSNTLPISDNGTPANATEEESFDDKRRNELFLKDQIPKTVAIGGYVVLAVITSGCLPLIIPQLKWYYILIAYIFAPIMAFCNAYGSGLTDWSLATTYGKLAIFVFGAWAGASHGGVLVGLAACGVMMNIVGTASDLMQDFKTGYMTLASPRSMFVSQVIGTAMGCVIAPCVFWLFYKSFNIGASDGAYPAPYTIMYRNMAILGVNGLSSLPKYCLTLCYIAFVAAFIINLIKDLVPERVAKYIPIPMAAAIPFYLGPYFAIDMFMGSVILYFWEWRNKDEAQSFGPAVASGLMCGDGLWALPQAVLSLVNVNPPLCMKFLSRAANAKVDTFLGN.

The disordered stretch occupies residues 25–48 (RRNTTAAARGNAGEEEEEAEAVAP). 14 helical membrane-spanning segments follow: residues 70 to 90 (AFVV…KLSL), 93 to 113 (GVIP…VRLW), 138 to 158 (CVVS…LFGM), 180 to 200 (LGWI…ALVP), 242 to 262 (LGKY…YTAG), 300 to 320 (IVNV…WPLI), 345 to 365 (VFIT…KVFG), 418 to 438 (VAIG…PLII), 446 to 466 (ILIA…GSGL), 478 to 498 (LAIF…LVGL), 532 to 552 (FVSQ…VFWL), 593 to 613 (LTLC…KDLV), 631 to 651 (FYLG…LYFW), and 666 to 686 (VASG…VLSL).

This sequence belongs to the YSL (TC 2.A.67.2) family.

The protein resides in the membrane. May be involved in the transport of nicotianamine-chelated metals. The protein is Probable metal-nicotianamine transporter YSL11 (YSL11) of Oryza sativa subsp. japonica (Rice).